A 221-amino-acid chain; its full sequence is Zingipain-1 (221 aa).

3 disulfides stabilise this stretch: Cys24–Cys65, Cys58–Cys98, and Cys155–Cys206. The active site involves Cys27. Residues Asn95 and Asn156 are each glycosylated (N-linked (GlcNAc...) asparagine). Residues His161 and Asn181 contribute to the active site.

Belongs to the peptidase C1 family.

It carries out the reaction Preferential cleavage of peptides with a proline residue at the P2 position.. Cysteine proteinase with a high level of diversity in substrate specificity, an amino acid bearing a proline residue at the P2 position is preferred. The chain is Zingipain-1 from Zingiber officinale (Ginger).